Here is a 386-residue protein sequence, read N- to C-terminus: S-(hydroxymethyl)glutathione dehydrogenase (386 aa).

Position 2 is an N-acetylserine (serine 2). Zn(2+) is bound at residue cysteine 49. An NAD(+)-binding site is contributed by histidine 50. The Zn(2+) site is built by histidine 71, glutamate 72, cysteine 101, cysteine 104, cysteine 107, cysteine 115, and cysteine 179. NAD(+) is bound by residues 204–209 (GCGTVG), aspartate 228, 300–302 (IGV), and 325–327 (SAF).

The protein belongs to the zinc-containing alcohol dehydrogenase family. Class-III subfamily. Zn(2+) is required as a cofactor.

Its subcellular location is the cytoplasm. It is found in the mitochondrion. The catalysed reaction is a primary alcohol + NAD(+) = an aldehyde + NADH + H(+). The enzyme catalyses a secondary alcohol + NAD(+) = a ketone + NADH + H(+). It carries out the reaction S-(hydroxymethyl)glutathione + NADP(+) = S-formylglutathione + NADPH + H(+). It catalyses the reaction S-(hydroxymethyl)glutathione + NAD(+) = S-formylglutathione + NADH + H(+). The catalysed reaction is S-nitrosoglutathione + NADH + H(+) = S-(hydroxysulfenamide)glutathione + NAD(+). Functionally, oxidizes long-chain alcohols and, in the presence of glutathione, is able to oxidize formaldehyde. Is responsible for yeast resistance to formaldehyde. Also acts as a S-nitroso-glutathione reductase by catalyzing the NADH-dependent reduction of S-nitrosoglutathione, thereby regulating protein S-nitrosylation. This is S-(hydroxymethyl)glutathione dehydrogenase (SFA1) from Saccharomyces cerevisiae (strain ATCC 204508 / S288c) (Baker's yeast).